A 270-amino-acid chain; its full sequence is MYHVYLLSDATGETVERVARAALTQFRDVDIRLRRMGQIRNREDILRALDEVDRAPGIIFYTLVNTELAQFVRNEVEARQLEAVDLITPLLYKLAEFLEMRPQKLPGLQYEMNSEYYRRMEAVDFTVKQDDGQEPRNLHKADIVLIGVSRSSKTPLSMYLAHKGYKVANVPIIQGIDPPGELEEVEPERVVGLIIDTQRLVDIRSARLRNLRQSPRGSYADYRQVEEELAYCRRFYRAHPAWLVIDVTNKSVEESAAEILSRLHGDIRHD.

147 to 154 (GVSRSSKT) contacts ADP.

It belongs to the pyruvate, phosphate/water dikinase regulatory protein family. PDRP subfamily.

The catalysed reaction is N(tele)-phospho-L-histidyl/L-threonyl-[pyruvate, phosphate dikinase] + ADP = N(tele)-phospho-L-histidyl/O-phospho-L-threonyl-[pyruvate, phosphate dikinase] + AMP + H(+). The enzyme catalyses N(tele)-phospho-L-histidyl/O-phospho-L-threonyl-[pyruvate, phosphate dikinase] + phosphate + H(+) = N(tele)-phospho-L-histidyl/L-threonyl-[pyruvate, phosphate dikinase] + diphosphate. Bifunctional serine/threonine kinase and phosphorylase involved in the regulation of the pyruvate, phosphate dikinase (PPDK) by catalyzing its phosphorylation/dephosphorylation. The protein is Putative pyruvate, phosphate dikinase regulatory protein of Citrifermentans bemidjiense (strain ATCC BAA-1014 / DSM 16622 / JCM 12645 / Bem) (Geobacter bemidjiensis).